Reading from the N-terminus, the 122-residue chain is MSRIITAPHIGIEKLSAISLEELSCGLPDRYALPPDGHPVEPHLERLYPTAQSKRSLWDFASPGYTFHGLHRAQDYRRELDTLQSLLTTSQSSELQAAAALLKCQQDDDRLLQIILNLLHKV.

A coiled-coil region spans residues 71-87 (HRAQDYRRELDTLQSLL).

In terms of assembly, interacts with YscY.

It is found in the secreted. Required for Yop secretion. The chain is Yop proteins translocation protein X (yscX) from Yersinia enterocolitica.